The primary structure comprises 49 residues: L-amino-acid oxidase (49 aa).

43–44 (MS) provides a ligand contact to FAD.

It belongs to the flavin monoamine oxidase family. FIG1 subfamily. As to quaternary structure, homodimer; non-covalently linked. Requires FAD as cofactor. In terms of processing, N-glycosylated. As to expression, expressed by the venom gland.

It is found in the secreted. It carries out the reaction an L-alpha-amino acid + O2 + H2O = a 2-oxocarboxylate + H2O2 + NH4(+). The enzyme catalyses L-leucine + O2 + H2O = 4-methyl-2-oxopentanoate + H2O2 + NH4(+). Catalyzes an oxidative deamination of predominantly hydrophobic and aromatic L-amino acids, thus producing hydrogen peroxide that may contribute to the diverse toxic effects of this enzyme. Shows activity on L-Leu. Exhibits diverse biological activities, such as hemorrhage, hemolysis, edema, antibacterial and antiparasitic activities, as well as regulation of platelet aggregation. Its effect on platelets is controversial, since it either induces aggregation or inhibits agonist-induced aggregation. These different effects are probably due to different experimental conditions. In addition, this protein induces apoptosis and necrosis and has inhibitory effects on rat kidney function (decrease of blood flow and glomerular filtration). The polypeptide is L-amino-acid oxidase (Bothrops insularis (Golden lancehead)).